The sequence spans 696 residues: D-(-)-3-hydroxybutyrate oligomer hydrolase (696 aa).

Positions 1–26 (MDTHGWGSRILVGAALAALTMLGACN) are cleaved as a signal peptide. The active-site Charge relay system is the Ser309.

It belongs to the D-(-)-3-hydroxybutyrate oligomer hydrolase family.

It is found in the secreted. It catalyses the reaction (3R)-hydroxybutanoate dimer + H2O = 2 (R)-3-hydroxybutanoate + H(+). It participates in lipid metabolism; butanoate metabolism. In terms of biological role, participates in the degradation of poly-3-hydroxybutyrate (PHB). It works downstream of poly(3-hydroxybutyrate) depolymerase, hydrolyzing D(-)-3-hydroxybutyrate oligomers of various length (3HB-oligomers) into 3HB-monomers. The chain is D-(-)-3-hydroxybutyrate oligomer hydrolase from Burkholderia vietnamiensis (strain G4 / LMG 22486) (Burkholderia cepacia (strain R1808)).